We begin with the raw amino-acid sequence, 814 residues long: DNA topoisomerase 1 (814 aa).

Residues 1–12 (MSSSDSDSVSLS) show a composition bias toward low complexity. Residues 1–180 (MSSSDSDSVS…PNDEEDEDED (180 aa)) are disordered. Basic residues predominate over residues 13 to 22 (IRRRQRRGSS). 3 positions are modified to phosphoserine: S52, S54, and S136. T138 is subject to Phosphothreonine. 3 interaction with DNA regions span residues 404-405 (KY), 467-472 (RAGNEK), and 559-561 (SAK). Positions 411-814 (GSSLKGQSDL…AADTPPDWKW (404 aa)) constitute a Topo IB-type catalytic domain. The O-(3'-phospho-DNA)-tyrosine intermediate role is filled by Y773.

It belongs to the type IB topoisomerase family. As to quaternary structure, monomer.

The catalysed reaction is ATP-independent breakage of single-stranded DNA, followed by passage and rejoining.. Functionally, releases the supercoiling and torsional tension of DNA introduced during the DNA replication and transcription by transiently cleaving and rejoining one strand of the DNA duplex. Introduces a single-strand break via transesterification at a target site in duplex DNA. The scissile phosphodiester is attacked by the catalytic tyrosine of the enzyme, resulting in the formation of a DNA-(3'-phosphotyrosyl)-enzyme intermediate and the expulsion of a 5'-OH DNA strand. TThe free DNA strand then rotates around the intact phosphodiester bond on the opposing strand, thus removing DNA supercoils. Finally, in the religation step, the DNA 5'-OH attacks the covalent intermediate to expel the active-site tyrosine and restore the DNA phosphodiester backbone. The sequence is that of DNA topoisomerase 1 (top1) from Schizosaccharomyces pombe (strain 972 / ATCC 24843) (Fission yeast).